Here is a 118-residue protein sequence, read N- to C-terminus: Na(+)/H(+) antiporter subunit G1 (118 aa).

Transmembrane regions (helical) follow at residues 9 to 29 (IALI…IGIL), 41 to 61 (AGKA…LFFI), and 70 to 90 (QLIV…HLII).

The protein belongs to the CPA3 antiporters (TC 2.A.63) subunit G family. May form a heterooligomeric complex that consists of seven subunits: mnhA1, mnhB1, mnhC1, mnhD1, mnhE1, mnhF1 and mnhG1.

It localises to the cell membrane. Functionally, mnh complex is a Na(+)/H(+) antiporter involved in Na(+) excretion. The protein is Na(+)/H(+) antiporter subunit G1 (mnhG1) of Staphylococcus saprophyticus subsp. saprophyticus (strain ATCC 15305 / DSM 20229 / NCIMB 8711 / NCTC 7292 / S-41).